A 317-amino-acid chain; its full sequence is Melanocyte-stimulating hormone receptor (317 aa).

Residues 1-37 (MPMQGAQRRLLGSLNSTPTATPNLGLAANHTGAPCLE) lie on the Extracellular side of the membrane. A glycan (N-linked (GlcNAc...) asparagine) is linked at asparagine 29. Residues 38–63 (VSIPDGLFLSLGLVSLVENVLVVAAI) form a helical membrane-spanning segment. Topologically, residues 64 to 72 (AKNRNLHSP) are cytoplasmic. The chain crosses the membrane as a helical span at residues 73 to 93 (MYCFICCLALSDLLVSGSNML). Residues 94–118 (EMAVILLLEAGALATRASVVQQLQN) lie on the Extracellular side of the membrane. A helical membrane pass occupies residues 119-140 (TIDVLTCSSMLCSLCFLGAIAV). Over 141-163 (DRYVSIFYALRYHSIVTLPRARR) the chain is Cytoplasmic. Residues 164–183 (AIAAIWVASVLSSTLFIAYC) traverse the membrane as a helical segment. At 184-191 (DHAAVLLC) the chain is on the extracellular side. A helical membrane pass occupies residues 192–211 (LVVFFLAMLVLMAVLYVHML). Residues 212-240 (ARACQHAQGITRLHKRQLPAHQGFGLRGA) are Cytoplasmic-facing. Residues 241–266 (ATLTILLGIFFVCWGPFFLHLMLVVL) form a helical membrane-spanning segment. The Extracellular portion of the chain corresponds to 267 to 279 (CPQHLTCSCIFKN). A helical transmembrane segment spans residues 280 to 300 (FKVFLTLIICNTIIDPLIYAF). The Cytoplasmic segment spans residues 301–317 (RSQELCRTLKEVLLCSW). Cysteine 315 carries S-palmitoyl cysteine lipidation.

It belongs to the G-protein coupled receptor 1 family. In terms of assembly, interacts with MGRN1, but does not undergo MGRN1-mediated ubiquitination; this interaction competes with GNAS-binding and thus inhibits agonist-induced cAMP production. Interacts with OPN3; the interaction results in a decrease in MC1R-mediated cAMP signaling and ultimately a decrease in melanin production in melanocytes.

It localises to the cell membrane. Receptor for MSH (alpha, beta and gamma) and ACTH. The activity of this receptor is mediated by G proteins which activate adenylate cyclase. Mediates melanogenesis, the production of eumelanin (black/brown) and phaeomelanin (red/yellow), via regulation of cAMP signaling in melanocytes. This is Melanocyte-stimulating hormone receptor (MC1R) from Alouatta sara (Bolivian red howler monkey).